Here is a 181-residue protein sequence, read N- to C-terminus: NADH-quinone oxidoreductase subunit I (181 aa).

4Fe-4S ferredoxin-type domains are found at residues 44–74 (LNRY…VEGA) and 90–119 (RVYQ…MTND). 8 residues coordinate [4Fe-4S] cluster: Cys-54, Cys-57, Cys-60, Cys-64, Cys-99, Cys-102, Cys-105, and Cys-109.

It belongs to the complex I 23 kDa subunit family. As to quaternary structure, NDH-1 is composed of 14 different subunits. Subunits NuoA, H, J, K, L, M, N constitute the membrane sector of the complex. [4Fe-4S] cluster serves as cofactor.

Its subcellular location is the cell membrane. The catalysed reaction is a quinone + NADH + 5 H(+)(in) = a quinol + NAD(+) + 4 H(+)(out). In terms of biological role, NDH-1 shuttles electrons from NADH, via FMN and iron-sulfur (Fe-S) centers, to quinones in the respiratory chain. The immediate electron acceptor for the enzyme in this species is believed to be menaquinone. Couples the redox reaction to proton translocation (for every two electrons transferred, four hydrogen ions are translocated across the cytoplasmic membrane), and thus conserves the redox energy in a proton gradient. This is NADH-quinone oxidoreductase subunit I from Mycobacterium marinum (strain ATCC BAA-535 / M).